A 427-amino-acid polypeptide reads, in one-letter code: 3-phosphoshikimate 1-carboxyvinyltransferase (427 aa).

Residues Lys-22, Ser-23, and Arg-27 each contribute to the 3-phosphoshikimate site. Lys-22 serves as a coordination point for phosphoenolpyruvate. Phosphoenolpyruvate contacts are provided by Gly-96 and Arg-124. Residues Ser-169, Ser-170, Gln-171, Ser-197, Asp-313, Asn-336, and Lys-340 each contribute to the 3-phosphoshikimate site. Gln-171 is a phosphoenolpyruvate binding site. Asp-313 acts as the Proton acceptor in catalysis. Phosphoenolpyruvate-binding residues include Arg-344, Arg-386, and Lys-411.

It belongs to the EPSP synthase family. Monomer.

It is found in the cytoplasm. It carries out the reaction 3-phosphoshikimate + phosphoenolpyruvate = 5-O-(1-carboxyvinyl)-3-phosphoshikimate + phosphate. The protein operates within metabolic intermediate biosynthesis; chorismate biosynthesis; chorismate from D-erythrose 4-phosphate and phosphoenolpyruvate: step 6/7. Its function is as follows. Catalyzes the transfer of the enolpyruvyl moiety of phosphoenolpyruvate (PEP) to the 5-hydroxyl of shikimate-3-phosphate (S3P) to produce enolpyruvyl shikimate-3-phosphate and inorganic phosphate. The protein is 3-phosphoshikimate 1-carboxyvinyltransferase of Klebsiella pneumoniae subsp. pneumoniae (strain ATCC 700721 / MGH 78578).